The chain runs to 430 residues: Adenylosuccinate synthetase (430 aa).

GTP contacts are provided by residues 13-19 and 41-43; these read GDEGKGK and GHT. Catalysis depends on aspartate 14, which acts as the Proton acceptor. Residues aspartate 14 and glycine 41 each contribute to the Mg(2+) site. Residues 14–17, 39–42, threonine 130, arginine 144, glutamine 225, threonine 240, and arginine 304 contribute to the IMP site; these read DEGK and NAGH. The active-site Proton donor is the histidine 42. 300 to 306 provides a ligand contact to substrate; that stretch reads ASTGRPR. Residues arginine 306, 332–334, and 414–416 contribute to the GTP site; these read KLD and STG.

It belongs to the adenylosuccinate synthetase family. In terms of assembly, homodimer. It depends on Mg(2+) as a cofactor.

Its subcellular location is the cytoplasm. It catalyses the reaction IMP + L-aspartate + GTP = N(6)-(1,2-dicarboxyethyl)-AMP + GDP + phosphate + 2 H(+). The protein operates within purine metabolism; AMP biosynthesis via de novo pathway; AMP from IMP: step 1/2. Its function is as follows. Plays an important role in the de novo pathway of purine nucleotide biosynthesis. Catalyzes the first committed step in the biosynthesis of AMP from IMP. The chain is Adenylosuccinate synthetase from Stenotrophomonas maltophilia (strain R551-3).